Reading from the N-terminus, the 88-residue chain is MAAKSARKGPTKAKKNLLDSLGVESVDYKDTATLRVFISDRGKIRSRGVTGLTVQQQRQVAQAIKNAREMALLPYPGQDRQRRAALCP.

It belongs to the bacterial ribosomal protein bS18 family. In terms of assembly, part of the 30S ribosomal subunit. Forms a tight heterodimer with protein bS6.

Binds as a heterodimer with protein bS6 to the central domain of the 16S rRNA, where it helps stabilize the platform of the 30S subunit. The chain is Small ribosomal subunit protein bS18B (rpsR2) from Mycobacterium bovis (strain ATCC BAA-935 / AF2122/97).